The primary structure comprises 552 residues: uncharacterized protein (552 aa).

4 helical membrane-spanning segments follow: residues 127 to 147 (AIMLSFILILFQPFFIIISLL), 160 to 180 (LIIVTCIILSTLIALLSYINI), 393 to 413 (LTKQISLFLSISLFLCCLSAV), and 517 to 537 (VIDSWFDEVYAFACVFTFICI).

It is found in the membrane. This is an uncharacterized protein from Saccharomyces cerevisiae (strain ATCC 204508 / S288c) (Baker's yeast).